A 1198-amino-acid polypeptide reads, in one-letter code: Structural polyprotein (1198 aa).

The interaction with host EXOC1 stretch occupies residues 2–15 (TKKPGGPGKNRAIN). Positions 37–72 (LLDGRGPVRFVLALITFFKFTALAPTKALLGRWKAV) are hydrophobic; homodimerization of capsid protein C. The propeptide at 106–127 (GGNEGSIMWLASLAVVIACAGA) is ER anchor for the capsid protein C, removed in mature form by serine protease NS3. Residues 110 to 130 (GSIMWLASLAVVIACAGAMKL) traverse the membrane as a helical segment. An N-linked (GlcNAc...) asparagine; by host glycan is attached at Asn-142. Helical transmembrane passes span 254–274 (WIIRNPGYAFLAAVLGWMLGS) and 280–294 (VVFTILLLLVAPAYS). 6 cysteine pairs are disulfide-bonded: Cys-297–Cys-324, Cys-354–Cys-410, Cys-354–Cys-415, Cys-368–Cys-399, Cys-386–Cys-410, and Cys-386–Cys-415. The interval 392 to 405 (DRGWGNGCGLFGKG) is fusion peptide. Asn-448 carries N-linked (GlcNAc...) asparagine; by host glycosylation. Disulfide bonds link Cys-484–Cys-581 and Cys-598–Cys-629. 2 helical membrane-spanning segments follow: residues 747-767 (FGGMSWITQGLMGALLLWMGV) and 774-794 (IALAFLATGGVLVFLATNVHA). 6 disulfide bridges follow: Cys-798–Cys-809, Cys-849–Cys-937, Cys-973–Cys-1017, Cys-1074–Cys-1123, Cys-1085–Cys-1106, and Cys-1107–Cys-1110. Residues Asn-924 and Asn-1001 are each glycosylated (N-linked (GlcNAc...) asparagine; by host). Positions 1151 to 1177 (MVDPFSAGPSGDVSGHPGSPSQEVDGQ) are disordered.

In terms of assembly, homodimer. Interacts (via N-terminus) with host EXOC1 (via C-terminus); this interaction results in EXOC1 degradation through the proteasome degradation pathway. Interacts with host CAPRIN1; this interaction is involved in the suppression of the integrated stress response. As to quaternary structure, forms heterodimers with envelope protein E in the endoplasmic reticulum and Golgi. Homodimer; in the endoplasmic reticulum and Golgi. Interacts with protein prM. Interacts with non-structural protein 1. In terms of processing, genome polyprotein: Specific enzymatic cleavages in vivo yield mature proteins. Cleavages in the lumen of endoplasmic reticulum are performed by host signal peptidase, whereas cleavages in the cytoplasmic side are performed by serine protease NS3. Signal cleavage at the 2K-4B site requires a prior NS3 protease-mediated cleavage at the 4A-2K site. Post-translationally, cleaved in post-Golgi vesicles by a host furin, releasing the mature small envelope protein M, and peptide pr. This cleavage is incomplete as up to 30% of viral particles still carry uncleaved prM. N-glycosylated.

It localises to the secreted. The protein resides in the virion membrane. The protein localises to the host endoplasmic reticulum membrane. Plays a role in virus budding by binding to the cell membrane and gathering the viral RNA into a nucleocapsid that forms the core of a mature virus particle. During virus entry, may induce genome penetration into the host cytoplasm after hemifusion induced by the surface proteins. Can migrate to the cell nucleus where it modulates host functions. Overcomes the anti-viral effects of host EXOC1 by sequestering and degrading the latter through the proteasome degradation pathway. Inhibits the integrated stress response (ISR) in the infected cell by binding to host CAPRIN1. Its function is as follows. Inhibits RNA silencing by interfering with host Dicer. In terms of biological role, prevents premature fusion activity of envelope proteins in trans-Golgi by binding to envelope protein E at pH6.0. After virion release in extracellular space, gets dissociated from E dimers. Functionally, acts as a chaperone for envelope protein E during intracellular virion assembly by masking and inactivating envelope protein E fusion peptide. prM is the only viral peptide matured by host furin in the trans-Golgi network probably to avoid catastrophic activation of the viral fusion activity in acidic Golgi compartment prior to virion release. prM-E cleavage is inefficient, and many virions are only partially matured. These uncleaved prM would play a role in immune evasion. May play a role in virus budding. Exerts cytotoxic effects by activating a mitochondrial apoptotic pathway through M ectodomain. May display a viroporin activity. Its function is as follows. Binds to host cell surface receptor and mediates fusion between viral and cellular membranes. Envelope protein is synthesized in the endoplasmic reticulum in the form of heterodimer with protein prM. They play a role in virion budding in the ER, and the newly formed immature particle is covered with 60 spikes composed of heterodimer between precursor prM and envelope protein E. The virion is transported to the Golgi apparatus where the low pH causes dissociation of PrM-E heterodimers and formation of E homodimers. prM-E cleavage is inefficient, and many virions are only partially matured. These uncleaved prM would play a role in immune evasion. In terms of biological role, may play a role in neuroinvasiveness. The polypeptide is Structural polyprotein (Ardeidae (herons)).